A 629-amino-acid polypeptide reads, in one-letter code: DNA mismatch repair protein MutL (629 aa).

The segment at 376–396 is disordered; it reads QYHEKPQQNQPHFSNTPVLPN. Polar residues predominate over residues 382 to 396; that stretch reads QQNQPHFSNTPVLPN.

Belongs to the DNA mismatch repair MutL/HexB family.

In terms of biological role, this protein is involved in the repair of mismatches in DNA. It is required for dam-dependent methyl-directed DNA mismatch repair. May act as a 'molecular matchmaker', a protein that promotes the formation of a stable complex between two or more DNA-binding proteins in an ATP-dependent manner without itself being part of a final effector complex. This Haemophilus influenzae (strain PittEE) protein is DNA mismatch repair protein MutL.